Here is a 372-residue protein sequence, read N- to C-terminus: N-methyl-L-tryptophan oxidase (372 aa).

4–34 (DLIIIGSGSVGAAAGYYATRAGLNVLMTDAH) serves as a coordination point for FAD. Cysteine 308 carries the post-translational modification S-8alpha-FAD cysteine.

The protein belongs to the MSOX/MTOX family. MTOX subfamily. In terms of assembly, monomer. FAD is required as a cofactor.

It carries out the reaction N(alpha)-methyl-L-tryptophan + O2 + H2O = L-tryptophan + formaldehyde + H2O2. Catalyzes the oxidative demethylation of N-methyl-L-tryptophan. The polypeptide is N-methyl-L-tryptophan oxidase (Shigella sonnei (strain Ss046)).